The chain runs to 210 residues: Large ribosomal subunit protein uL3 (210 aa).

Belongs to the universal ribosomal protein uL3 family. As to quaternary structure, part of the 50S ribosomal subunit. Forms a cluster with proteins L14 and L19.

Its function is as follows. One of the primary rRNA binding proteins, it binds directly near the 3'-end of the 23S rRNA, where it nucleates assembly of the 50S subunit. The polypeptide is Large ribosomal subunit protein uL3 (Syntrophotalea carbinolica (strain DSM 2380 / NBRC 103641 / GraBd1) (Pelobacter carbinolicus)).